The chain runs to 678 residues: Glycine--tRNA ligase beta subunit (678 aa).

The protein belongs to the class-II aminoacyl-tRNA synthetase family. In terms of assembly, tetramer of two alpha and two beta subunits.

The protein resides in the cytoplasm. The enzyme catalyses tRNA(Gly) + glycine + ATP = glycyl-tRNA(Gly) + AMP + diphosphate. This is Glycine--tRNA ligase beta subunit from Streptococcus pneumoniae serotype 19F (strain G54).